Consider the following 140-residue polypeptide: Holo-[acyl-carrier-protein] synthase (140 aa).

Residues Asp9 and Glu63 each coordinate Mg(2+).

Belongs to the P-Pant transferase superfamily. AcpS family. Mg(2+) serves as cofactor.

The protein resides in the cytoplasm. It carries out the reaction apo-[ACP] + CoA = holo-[ACP] + adenosine 3',5'-bisphosphate + H(+). Functionally, transfers the 4'-phosphopantetheine moiety from coenzyme A to a Ser of acyl-carrier-protein. This is Holo-[acyl-carrier-protein] synthase from Paraburkholderia phytofirmans (strain DSM 17436 / LMG 22146 / PsJN) (Burkholderia phytofirmans).